We begin with the raw amino-acid sequence, 1620 residues long: ABC-type organic anion transporter ABCA8A (1620 aa).

Helical transmembrane passes span 30–50, 224–244, 263–283, 294–314, 328–348, 357–377, and 397–417; these read TFLE…FLQL, CFLF…SAGV, SAFW…VTLL, VFLT…LSLI, FLTD…GFTA, LEWL…VQLL, and IGTI…TFYF. 2 N-linked (GlcNAc...) asparagine glycosylation sites follow: asparagine 454 and asparagine 482. Residues 478–713 enclose the ABC transporter 1 domain; sequence IRIRNLTKDY…WGIGYHLSLQ (236 aa). An ATP-binding site is contributed by 514-521; that stretch reads GHSGAGKS. The chain crosses the membrane as a helical span at residues 861–881; the sequence is IVILILVLGIGLLHILSANIY. A glycan (N-linked (GlcNAc...) asparagine) is linked at asparagine 967. 7 consecutive transmembrane segments (helical) span residues 979-999, 1019-1039, 1068-1088, 1105-1125, 1133-1153, 1159-1179, and 1196-1216; these read CFPV…APSA, YLAY…YISM, ALFE…AFYA, ILYV…ISFI, SGLW…FMLI, ISLF…CTLL, and EYSY…VVIL. One can recognise an ABC transporter 2 domain in the interval 1284–1517; the sequence is LRKEYKGKKK…FGKEYLLEMK (234 aa). An ATP-binding site is contributed by 1322 to 1329; the sequence is GHNGAGKS.

This sequence belongs to the ABC transporter superfamily. ABCA family. In terms of tissue distribution, expressed in lung, heart, liver, skeletal muscle and testis. Highly expressed in the liver, and is also abundant in heart and skeletal muscle. Highly expressed in heart.

The protein resides in the cell membrane. It is found in the basolateral cell membrane. It carries out the reaction taurocholate(in) + ATP + H2O = taurocholate(out) + ADP + phosphate + H(+). The catalysed reaction is cholesterol(in) + ATP + H2O = cholesterol(out) + ADP + phosphate + H(+). Cholesterol efflux is increased by extracellularly applied taurocholate. Functionally, mediates cholesterol and taurocholate efflux. Through the interaction with ABCA1 potentiates the cholesterol efflux to lipid-free APOA1, in turn regulates high-density lipoprotein cholesterol levels. In Mus musculus (Mouse), this protein is ABC-type organic anion transporter ABCA8A.